We begin with the raw amino-acid sequence, 309 residues long: Calponin-2 (309 aa).

Serine 2 carries the N-acetylserine modification. Residues lysine 8 and lysine 25 each carry the N6-acetyllysine modification. The Calponin-homology (CH) domain maps to 28-132 (PQKEAELRSW…SLLALAGKAK (105 aa)). Serine 138 is modified (phosphoserine). Calponin-like repeat units lie at residues 166-191 (IGLQMGTNKCASQSGMTAYGTRRHLY), 206-231 (ISLQMGTNKCASQVGMTAPGTRRHIY), and 245-269 (MSLQMGYTQGANQSGQVFGLGRQIY). Positions 273 to 309 (YCPQGPAADGAPAAAGDGPGPGEPSECPPYYQEEAGY) are disordered. Residues 277–288 (GPAADGAPAAAG) show a composition bias toward low complexity.

The protein belongs to the calponin family.

Thin filament-associated protein that is implicated in the regulation and modulation of smooth muscle contraction. It is capable of binding to actin, calmodulin and tropomyosin. The interaction of calponin with actin inhibits the actomyosin Mg-ATPase activity. This chain is Calponin-2 (CNN2), found in Bos taurus (Bovine).